Consider the following 61-residue polypeptide: Metallothionein-2E (61 aa).

Methionine 1 carries the N-acetylmethionine modification. The segment at 1 to 29 is beta; the sequence is MDPNCSCATRDSCACASSCKCKECKCTSC. A divalent metal cation is bound by residues cysteine 5, cysteine 7, cysteine 13, cysteine 15, cysteine 19, cysteine 21, cysteine 24, cysteine 26, cysteine 29, cysteine 33, cysteine 34, cysteine 36, cysteine 37, cysteine 41, cysteine 44, cysteine 48, cysteine 50, cysteine 57, cysteine 59, and cysteine 60. The alpha stretch occupies residues 30–61; sequence KKSCCSCCPAGCTKCAQGCICKGALDKCSCCA.

The protein belongs to the metallothionein superfamily. Type 1 family. Monomer.

Its function is as follows. Metallothioneins have a high content of cysteine residues that bind various heavy metals; these proteins are transcriptionally regulated by both heavy metals and glucocorticoids. This chain is Metallothionein-2E, found in Oryctolagus cuniculus (Rabbit).